Reading from the N-terminus, the 875-residue chain is GATOR2 complex protein MIOS (875 aa).

6 WD repeats span residues 61–100 (PYMK…NSKF), 111–155 (KHAR…TPDI), 182–221 (GQND…QKMF), 223–261 (NTKA…KPVL), 265–306 (EQPK…TPIG), and 395–437 (RLRA…KQYT). The C4-type zinc finger occupies 735 to 781 (VSCNFCGKSISYSCSAVPHQGRGFSQYGVSGSPTKSKVTSCPGCRKP). Zn(2+) is bound by residues Cys-737 and Cys-740. Phosphoserine occurs at positions 759 and 766. Zn(2+) contacts are provided by Cys-775, Cys-778, Cys-788, Cys-827, Cys-830, His-832, His-835, His-838, Cys-849, Cys-854, and Cys-858. An RING-type; atypical zinc finger spans residues 782 to 863 (LPRCALCLIN…CTCKCMQLDT (82 aa)).

Belongs to the WD repeat mio family. As to quaternary structure, component of the GATOR2 subcomplex, composed of MIOS, SEC13, SEH1L, WDR24 and WDR59. The GATOR2 complex interacts with CASTOR1 and CASTOR2; the interaction is negatively regulated by arginine. CASTOR1 and CASTOR2 convey leucine availability via direct interaction with MIOS. The GATOR2 complex interacts with SESN1, SESN2 and SESN3; the interaction is negatively regulated by amino acids. Interacts with SAR1A and SAR1B; the interaction is direct, disrupted by leucine and mediates the interaction of SAR1A or SAR1B with the GATOR2 complex to negatively regulate the TORC1 signaling upon leucine deprivation.

The protein resides in the lysosome membrane. Its activity is regulated as follows. The GATOR2 complex is negatively regulated by the upstream amino acid sensors CASTOR1 and SESN2, which sequester the GATOR2 complex in absence of amino acids. In the presence of abundant amino acids, GATOR2 is released from CASTOR1 and SESN2 and activated. Its function is as follows. As a component of the GATOR2 complex, functions as an activator of the amino acid-sensing branch of the mTORC1 signaling pathway. The GATOR2 complex indirectly activates mTORC1 through the inhibition of the GATOR1 subcomplex. GATOR2 probably acts as an E3 ubiquitin-protein ligase toward GATOR1. In the presence of abundant amino acids, the GATOR2 complex mediates ubiquitination of the NPRL2 core component of the GATOR1 complex, leading to GATOR1 inactivation. In the absence of amino acids, GATOR2 is inhibited, activating the GATOR1 complex. Within the GATOR2 complex, MIOS is required to prevent autoubiquitination of WDR24, the catalytic subunit of the complex. The GATOR2 complex is required for brain myelination. The polypeptide is GATOR2 complex protein MIOS (Pongo abelii (Sumatran orangutan)).